A 138-amino-acid chain; its full sequence is Large ribosomal subunit protein uL16 (138 aa).

The protein belongs to the universal ribosomal protein uL16 family. As to quaternary structure, part of the 50S ribosomal subunit.

Functionally, binds 23S rRNA and is also seen to make contacts with the A and possibly P site tRNAs. The sequence is that of Large ribosomal subunit protein uL16 from Rubrobacter xylanophilus (strain DSM 9941 / JCM 11954 / NBRC 16129 / PRD-1).